Consider the following 606-residue polypeptide: Putative helicase 172L (606 aa).

Residues 59 to 264 (GEKTWGVRGG…WAQLRFCGYK (206 aa)) enclose the Helicase ATP-binding domain. 72–79 (LCMGLGKT) is an ATP binding site. The region spanning 437-586 (YIKSSNFEIS…ASYLEGKERI (150 aa)) is the Helicase C-terminal domain.

It belongs to the SNF2/RAD54 helicase family.

In Invertebrate iridescent virus 6 (IIV-6), this protein is Putative helicase 172L.